We begin with the raw amino-acid sequence, 500 residues long: NAD(P)H-quinone oxidoreductase chain 4, chloroplastic (500 aa).

A run of 14 helical transmembrane segments spans residues 4-24, 37-57, 87-107, 113-130, 134-154, 167-187, 208-228, 242-262, 272-292, 305-325, 330-350, 386-406, 411-431, and 462-482; these read FPWL…IFFL, ICIC…HFQL, IGPI…AWPI, LFHF…GSFS, LLLF…LLAM, FILY…GVAL, VLEI…LPII, HYST…YGLI, AHSI…IYAA, IAYS…SLTD, GALL…FLAG, LALP…GIIT, VLIP…LTPI, and LFLS…PDFV.

The protein belongs to the complex I subunit 4 family.

The protein resides in the plastid. It is found in the chloroplast thylakoid membrane. It carries out the reaction a plastoquinone + NADH + (n+1) H(+)(in) = a plastoquinol + NAD(+) + n H(+)(out). The enzyme catalyses a plastoquinone + NADPH + (n+1) H(+)(in) = a plastoquinol + NADP(+) + n H(+)(out). The protein is NAD(P)H-quinone oxidoreductase chain 4, chloroplastic of Atropa belladonna (Belladonna).